The primary structure comprises 367 residues: Polygalacturonase (367 aa).

A signal peptide spans Met1–Ala19. An intrachain disulfide couples Cys27 to Cys42. Asn185 carries an N-linked (GlcNAc...) asparagine glycan. Residues Thr187–Gln208 form a PbH1 1 repeat. The active-site Proton donor is the Asp201. An intrachain disulfide couples Cys203 to Cys219. Residue His223 is part of the active site. The PbH1 2 repeat unit spans residues Val240 to Thr261. The N-linked (GlcNAc...) asparagine glycan is linked to Asn242. A disulfide bridge connects residues Cys334 and Cys339. N-linked (GlcNAc...) asparagine glycans are attached at residues Asn343 and Asn357. The cysteines at positions 358 and 367 are disulfide-linked.

It belongs to the glycosyl hydrolase 28 family. Expressed in larval carcasses and gut, and adult gut.

It is found in the secreted. The protein localises to the cell wall. It catalyses the reaction (1,4-alpha-D-galacturonosyl)n+m + H2O = (1,4-alpha-D-galacturonosyl)n + (1,4-alpha-D-galacturonosyl)m.. The polypeptide is Polygalacturonase (Phaedon cochleariae (Mustard beetle)).